The primary structure comprises 653 residues: Dual specificity protein kinase shkB (653 aa).

The tract at residues 112–133 (NPNNNNNNSNNTNSSDSNQNYS) is disordered. One can recognise a Protein kinase domain in the interval 174–432 (YNREAKLGSG…FAEISKQRIL (259 aa)). Residues 180 to 188 (LGSGAFGSV) and Lys-201 contribute to the ATP site. Asp-298 acts as the Proton acceptor in catalysis. An SH2 domain is found at 534–625 (GFMAATSSKN…IKEPFEGGPF (92 aa)).

Belongs to the protein kinase superfamily. TKL Ser/Thr protein kinase family. SH2 domain-containing protein kinase subfamily.

It is found in the membrane. It carries out the reaction L-seryl-[protein] + ATP = O-phospho-L-seryl-[protein] + ADP + H(+). It catalyses the reaction L-threonyl-[protein] + ATP = O-phospho-L-threonyl-[protein] + ADP + H(+). Functionally, required for proper chemotaxis and phagocytosis; proper spatiotemporal control of F-actin levels in chemotaxing cells. Negative regulator of the PI3K (phosphatidylinositol 3 kinase) pathway. Predominantly phosphorylates serines and threonines and tyrosines at a lower level. The sequence is that of Dual specificity protein kinase shkB (shkB) from Dictyostelium discoideum (Social amoeba).